The primary structure comprises 125 residues: Fluoride-specific ion channel FluC (125 aa).

4 helical membrane passes run 4–24, 35–55, 69–89, and 103–123; these read WLFVAAGGAIGACLRFGISEL, YGTLVVNVVGSFIMGIAFALI, LMVGILGALTTFSSFALDTVV, and MGLNLSLCLAMVLLGMQLVAS. Residues Gly-75 and Thr-78 each coordinate Na(+).

This sequence belongs to the fluoride channel Fluc/FEX (TC 1.A.43) family.

The protein resides in the cell inner membrane. It catalyses the reaction fluoride(in) = fluoride(out). Its activity is regulated as follows. Na(+) is not transported, but it plays an essential structural role and its presence is essential for fluoride channel function. Its function is as follows. Fluoride-specific ion channel. Important for reducing fluoride concentration in the cell, thus reducing its toxicity. This Aeromonas salmonicida (strain A449) protein is Fluoride-specific ion channel FluC.